Here is a 533-residue protein sequence, read N- to C-terminus: Chromosomal replication initiator protein DnaA (533 aa).

Residues 1 to 72 (MNDFWQHCSA…DLARDFWNAP (72 aa)) are domain I, interacts with DnaA modulators. Residues 72 to 196 (PIEVQFVLDP…EAADSMYERS (125 aa)) form a domain II region. Residues 83–110 (AGQRSPAGATPLAPRAPLPSANPAPVGP) are disordered. Over residues 96–110 (PRAPLPSANPAPVGP) the composition is skewed to pro residues. Residues 197–413 (KLNPVLTFDN…GALRKILAYS (217 aa)) form a domain III, AAA+ region region. ATP is bound by residues Gly-241, Gly-243, Lys-244, and Thr-245. The tract at residues 414–533 (KFHGREITIE…LHVLEQTLKG (120 aa)) is domain IV, binds dsDNA.

Belongs to the DnaA family. As to quaternary structure, oligomerizes as a right-handed, spiral filament on DNA at oriC.

The protein resides in the cytoplasm. Functionally, plays an essential role in the initiation and regulation of chromosomal replication. ATP-DnaA binds to the origin of replication (oriC) to initiate formation of the DNA replication initiation complex once per cell cycle. Binds the DnaA box (a 9 base pair repeat at the origin) and separates the double-stranded (ds)DNA. Forms a right-handed helical filament on oriC DNA; dsDNA binds to the exterior of the filament while single-stranded (ss)DNA is stabiized in the filament's interior. The ATP-DnaA-oriC complex binds and stabilizes one strand of the AT-rich DNA unwinding element (DUE), permitting loading of DNA polymerase. After initiation quickly degrades to an ADP-DnaA complex that is not apt for DNA replication. Binds acidic phospholipids. The protein is Chromosomal replication initiator protein DnaA of Burkholderia mallei (strain NCTC 10247).